We begin with the raw amino-acid sequence, 353 residues long: Glutamine synthetase nodule isozyme (353 aa).

Residues 19 to 99 form the GS beta-grasp domain; that stretch reads IIAEYIWVGG…VMCDTYTPAG (81 aa). Residues 106 to 353 enclose the GS catalytic domain; sequence KRHAAAKIFS…TSMIAETTLL (248 aa).

Belongs to the glutamine synthetase family. In terms of assembly, homooctamer.

It is found in the cytoplasm. The catalysed reaction is L-glutamate + NH4(+) + ATP = L-glutamine + ADP + phosphate + H(+). This is Glutamine synthetase nodule isozyme from Lupinus luteus (European yellow lupine).